The chain runs to 610 residues: UvrABC system protein C (610 aa).

The GIY-YIG domain occupies 16 to 94 (SQPGVYRMYD…IKLYQPRYNV (79 aa)). The UVR domain maps to 204-239 (DQVLTQLIARMEKASQNLEFEEAARIRDQIQAVRRV).

The protein belongs to the UvrC family. Interacts with UvrB in an incision complex.

The protein resides in the cytoplasm. Its function is as follows. The UvrABC repair system catalyzes the recognition and processing of DNA lesions. UvrC both incises the 5' and 3' sides of the lesion. The N-terminal half is responsible for the 3' incision and the C-terminal half is responsible for the 5' incision. In Escherichia fergusonii (strain ATCC 35469 / DSM 13698 / CCUG 18766 / IAM 14443 / JCM 21226 / LMG 7866 / NBRC 102419 / NCTC 12128 / CDC 0568-73), this protein is UvrABC system protein C.